Reading from the N-terminus, the 297-residue chain is Probable GTP 3',8-cyclase (297 aa).

The Radical SAM core domain maps to Glu-4–Arg-220. A GTP-binding site is contributed by Arg-13. The [4Fe-4S] cluster site is built by Cys-20 and Cys-24. S-adenosyl-L-methionine is bound at residue Tyr-26. Cys-27 lines the [4Fe-4S] cluster pocket. Lys-61 contacts GTP. Gly-65 lines the S-adenosyl-L-methionine pocket. A GTP-binding site is contributed by Thr-91. Residue Ser-115 coordinates S-adenosyl-L-methionine. Lys-151 lines the GTP pocket. [4Fe-4S] cluster contacts are provided by Cys-242 and Cys-245. Arg-247–Arg-249 provides a ligand contact to GTP. Cys-259 serves as a coordination point for [4Fe-4S] cluster.

It belongs to the radical SAM superfamily. MoaA family. It depends on [4Fe-4S] cluster as a cofactor.

The enzyme catalyses GTP + AH2 + S-adenosyl-L-methionine = (8S)-3',8-cyclo-7,8-dihydroguanosine 5'-triphosphate + 5'-deoxyadenosine + L-methionine + A + H(+). The protein operates within cofactor biosynthesis; molybdopterin biosynthesis. Its function is as follows. Catalyzes the cyclization of GTP to (8S)-3',8-cyclo-7,8-dihydroguanosine 5'-triphosphate. In Methanococcus vannielii (strain ATCC 35089 / DSM 1224 / JCM 13029 / OCM 148 / SB), this protein is Probable GTP 3',8-cyclase.